The sequence spans 149 residues: Nucleoside diphosphate kinase (149 aa).

6 residues coordinate ATP: Lys9, Phe57, Arg85, Thr91, Arg102, and Asn112. The Pros-phosphohistidine intermediate role is filled by His115.

It belongs to the NDK family. Homotetramer. The cofactor is Mg(2+).

The protein resides in the cytoplasm. The catalysed reaction is a 2'-deoxyribonucleoside 5'-diphosphate + ATP = a 2'-deoxyribonucleoside 5'-triphosphate + ADP. The enzyme catalyses a ribonucleoside 5'-diphosphate + ATP = a ribonucleoside 5'-triphosphate + ADP. Functionally, major role in the synthesis of nucleoside triphosphates other than ATP. The ATP gamma phosphate is transferred to the NDP beta phosphate via a ping-pong mechanism, using a phosphorylated active-site intermediate. The sequence is that of Nucleoside diphosphate kinase from Carboxydothermus hydrogenoformans (strain ATCC BAA-161 / DSM 6008 / Z-2901).